Here is a 156-residue protein sequence, read N- to C-terminus: Ribosome maturation factor RimP (156 aa).

It belongs to the RimP family.

The protein localises to the cytoplasm. Its function is as follows. Required for maturation of 30S ribosomal subunits. The chain is Ribosome maturation factor RimP from Gloeobacter violaceus (strain ATCC 29082 / PCC 7421).